The chain runs to 321 residues: Lipoyl synthase (321 aa).

[4Fe-4S] cluster-binding residues include Cys68, Cys73, Cys79, Cys94, Cys98, Cys101, and Ser308. Residues 80–297 enclose the Radical SAM core domain; that stretch reads FNHGTATFMI…KQEALAMGFT (218 aa).

This sequence belongs to the radical SAM superfamily. Lipoyl synthase family. The cofactor is [4Fe-4S] cluster.

It is found in the cytoplasm. The enzyme catalyses [[Fe-S] cluster scaffold protein carrying a second [4Fe-4S](2+) cluster] + N(6)-octanoyl-L-lysyl-[protein] + 2 oxidized [2Fe-2S]-[ferredoxin] + 2 S-adenosyl-L-methionine + 4 H(+) = [[Fe-S] cluster scaffold protein] + N(6)-[(R)-dihydrolipoyl]-L-lysyl-[protein] + 4 Fe(3+) + 2 hydrogen sulfide + 2 5'-deoxyadenosine + 2 L-methionine + 2 reduced [2Fe-2S]-[ferredoxin]. It participates in protein modification; protein lipoylation via endogenous pathway; protein N(6)-(lipoyl)lysine from octanoyl-[acyl-carrier-protein]: step 2/2. In terms of biological role, catalyzes the radical-mediated insertion of two sulfur atoms into the C-6 and C-8 positions of the octanoyl moiety bound to the lipoyl domains of lipoate-dependent enzymes, thereby converting the octanoylated domains into lipoylated derivatives. The polypeptide is Lipoyl synthase (Sodalis glossinidius (strain morsitans)).